Here is a 149-residue protein sequence, read N- to C-terminus: MERSLIILKPDAVQRGLIGPILTRIEQRGLRIVGMKLMQIDESLARRHYAIHEGKAFFDSLITYITSGPVVVLVVTGKNIIEIVRSMVGATNPVKAAPGTIRGDFALDIGRNLIHASDSPENGEMEVSLFFRPEELVEMHRSTDQWIYE.

6 residues coordinate ATP: lysine 9, phenylalanine 57, arginine 85, threonine 91, arginine 102, and asparagine 112. The Pros-phosphohistidine intermediate role is filled by histidine 115.

The protein belongs to the NDK family. Homotetramer. The cofactor is Mg(2+).

The protein resides in the cytoplasm. It carries out the reaction a 2'-deoxyribonucleoside 5'-diphosphate + ATP = a 2'-deoxyribonucleoside 5'-triphosphate + ADP. The catalysed reaction is a ribonucleoside 5'-diphosphate + ATP = a ribonucleoside 5'-triphosphate + ADP. Major role in the synthesis of nucleoside triphosphates other than ATP. The ATP gamma phosphate is transferred to the NDP beta phosphate via a ping-pong mechanism, using a phosphorylated active-site intermediate. In Roseiflexus sp. (strain RS-1), this protein is Nucleoside diphosphate kinase.